Consider the following 155-residue polypeptide: Protein-export protein SecB 1 (155 aa).

It belongs to the SecB family. In terms of assembly, homotetramer, a dimer of dimers. One homotetramer interacts with 1 SecA dimer.

The protein localises to the cytoplasm. Its function is as follows. One of the proteins required for the normal export of preproteins out of the cell cytoplasm. It is a molecular chaperone that binds to a subset of precursor proteins, maintaining them in a translocation-competent state. It also specifically binds to its receptor SecA. This Polaromonas naphthalenivorans (strain CJ2) protein is Protein-export protein SecB 1.